The sequence spans 395 residues: Dihydrolipoyllysine-residue succinyltransferase component of 2-oxoglutarate dehydrogenase complex (395 aa).

Positions 2–77 constitute a Lipoyl-binding domain; it reads RVKIIVPSLG…AVGEEIGEIN (76 aa). The residue at position 43 (Lys-43) is an N6-lipoyllysine. The region spanning 111–148 is the Peripheral subunit-binding (PSBD) domain; that stretch reads TLAPSVQKLVTENKLDPNNIKGTGRDGRITKGDVLATI. Active-site residues include His-366 and Asp-370.

It belongs to the 2-oxoacid dehydrogenase family. In terms of assembly, forms a 24-polypeptide structural core with octahedral symmetry. Part of the 2-oxoglutarate dehydrogenase (OGDH) complex composed of E1 (2-oxoglutarate dehydrogenase), E2 (dihydrolipoamide succinyltransferase) and E3 (dihydrolipoamide dehydrogenase); the complex contains multiple copies of the three enzymatic components (E1, E2 and E3). It depends on (R)-lipoate as a cofactor.

The enzyme catalyses N(6)-[(R)-dihydrolipoyl]-L-lysyl-[protein] + succinyl-CoA = N(6)-[(R)-S(8)-succinyldihydrolipoyl]-L-lysyl-[protein] + CoA. It functions in the pathway amino-acid degradation; L-lysine degradation via saccharopine pathway; glutaryl-CoA from L-lysine: step 6/6. In terms of biological role, E2 component of the 2-oxoglutarate dehydrogenase (OGDH) complex which catalyzes the second step in the conversion of 2-oxoglutarate to succinyl-CoA and CO(2). This Rickettsia conorii (strain ATCC VR-613 / Malish 7) protein is Dihydrolipoyllysine-residue succinyltransferase component of 2-oxoglutarate dehydrogenase complex (sucB).